Here is a 494-residue protein sequence, read N- to C-terminus: Inositol-trisphosphate 3-kinase homolog (494 aa).

Residues Ser-206, Lys-218, 260-262, and Asp-276 contribute to the ATP site; that span reads EDL. Substrate-binding positions include Lys-278 and 322-329; that span reads KLRYMQFR. Residues Lys-346 and Asp-426 each contribute to the ATP site. Residue Lys-429 participates in substrate binding.

The protein belongs to the inositol phosphokinase (IPK) family. Expressed in spermatheca.

The catalysed reaction is 1D-myo-inositol 1,4,5-trisphosphate + ATP = 1D-myo-inositol 1,3,4,5-tetrakisphosphate + ADP + H(+). Unlike mammalian IP3K, may not be regulated by calmodulin. Its function is as follows. Probably by regulating inositol 1,4,5-trisphosphate levels, negatively regulates posterior body wall muscle contractions required for defecation and let-23 signaling pathway that controls spermathecal dilation and ovulation. May also regulate ovulation downstream of actin cross-linker fln-1. The polypeptide is Inositol-trisphosphate 3-kinase homolog (Caenorhabditis elegans).